The following is a 187-amino-acid chain: MNETQIQRETRQVVEDVLEKTNLKQGALFVLGLSSSEVLGGHIGKESSQEIGELIVETILDILGSRGIHLAVQGCEHVNRALVVERQVAEQFGLEIVSVHPTLHAGGSGQLAAFKFMQDPVEVEFIKAHAGLDIGDTAIGMHVKHVQVPIRPILREIGHAHVTALASRPKLIGGARAHYPQDAIRKF.

It belongs to the UPF0340 family.

In Streptococcus pneumoniae serotype 4 (strain ATCC BAA-334 / TIGR4), this protein is UPF0340 protein SP_0663.